A 326-amino-acid polypeptide reads, in one-letter code: tRNA-modifying protein YgfZ (326 aa).

Folate contacts are provided by W27 and W189.

It belongs to the tRNA-modifying YgfZ family.

The protein resides in the cytoplasm. Functionally, folate-binding protein involved in regulating the level of ATP-DnaA and in the modification of some tRNAs. It is probably a key factor in regulatory networks that act via tRNA modification, such as initiation of chromosomal replication. This Escherichia coli O17:K52:H18 (strain UMN026 / ExPEC) protein is tRNA-modifying protein YgfZ.